The chain runs to 248 residues: Proteasome subunit alpha (248 aa).

This sequence belongs to the peptidase T1A family. The 20S proteasome core is composed of 14 alpha and 14 beta subunits that assemble into four stacked heptameric rings, resulting in a barrel-shaped structure. The two inner rings, each composed of seven catalytic beta subunits, are sandwiched by two outer rings, each composed of seven alpha subunits. The catalytic chamber with the active sites is on the inside of the barrel. Has a gated structure, the ends of the cylinder being occluded by the N-termini of the alpha-subunits. Is capped at one or both ends by the proteasome regulatory ATPase, PAN.

The protein resides in the cytoplasm. With respect to regulation, the formation of the proteasomal ATPase PAN-20S proteasome complex, via the docking of the C-termini of PAN into the intersubunit pockets in the alpha-rings, triggers opening of the gate for substrate entry. Interconversion between the open-gate and close-gate conformations leads to a dynamic regulation of the 20S proteasome proteolysis activity. Component of the proteasome core, a large protease complex with broad specificity involved in protein degradation. The sequence is that of Proteasome subunit alpha from Methanothermobacter thermautotrophicus (strain ATCC 29096 / DSM 1053 / JCM 10044 / NBRC 100330 / Delta H) (Methanobacterium thermoautotrophicum).